The sequence spans 1736 residues: Collagen alpha-2(XI) chain (1736 aa).

A signal peptide spans 1–27; sequence MERCSRCHRLLLFLPLVLGLSAAPGWA. In terms of domain architecture, Laminin G-like spans 57–228; the sequence is DVAYRVARPA…QSCGQKDLEC (172 aa). Positions 215 to 486 are nonhelical region; sequence QAAYQSCGQK…ILQQARLALR (272 aa). Disordered regions lie at residues 228–270, 364–465, and 485–1538; these read CERE…PTES, LSAE…DKGP, and LRGP…GSPA. Residues 258–269 show a composition bias toward polar residues; it reads PQSQEPQKQPTE. Collagen-like domains lie at 399 to 447, 487 to 545, and 546 to 583; these read GPPG…GPPG, GPPG…ADGA, and RGMP…GLPG. The triple-helical region stretch occupies residues 487–1500; sequence GPPGPMGYTG…PGHPGPPGEV (1014 aa). The span at 497–533 shows a compositional bias: low complexity; it reads RPGPLGQPGSPGLKGESGDLGPQGPRGPQGLTGPPGK. The segment covering 615-624 has biased composition (pro residues); sequence KGPPGIPGPP. Positions 650-668 are enriched in low complexity; that stretch reads QQGTPGAQGLPGPQGAIGP. The 56-residue stretch at 682–737 folds into the Collagen-like 4 domain; the sequence is GMPGSDGLPGHPGKEGPPGTKGNQGPSGPQGPLGYPGPRGVKGVDGIRGLKGHKGE. The segment covering 765–774 has biased composition (basic and acidic residues); that stretch reads RGEDGPEGPK. Composition is skewed to low complexity over residues 776–789 and 842–861; these read RTGP…TGLM and PTGP…SGAK. Collagen-like domains lie at 868-924, 967-1025, 1026-1055, 1056-1086, and 1114-1172; these read GPHG…PGPP, GDPG…AAGS, GGPI…EKGP, IGPT…DGDK, and GPVG…ETGD. Over residues 994 to 1003 the composition is skewed to gly residues; sequence GTAGGPGLKG. Residues 1029 to 1040 show a composition bias toward pro residues; it reads IGPPGRPGPQGP. Low complexity-rich tracts occupy residues 1115-1133 and 1155-1164; these read PVGQ…ARGP and IGLQGLPGPS. Over residues 1176 to 1187 the composition is skewed to pro residues; it reads MGPPGPPGPRGP. Residues 1188–1197 show a composition bias toward low complexity; it reads AGPNGADGPQ. Over residues 1198 to 1207 the composition is skewed to gly residues; that stretch reads GSPGGVGNLG. Low complexity predominate over residues 1217–1230; it reads ESGSPGVQGEPGVK. Residues 1232 to 1241 show a composition bias toward basic and acidic residues; sequence PRGERGEKGE. The segment covering 1256–1272 has biased composition (low complexity); sequence PTGDNGPKGNPGPVGFP. A compositionally biased stretch (basic and acidic residues) spans 1287-1296; the sequence is DGAKGDRGED. The segment covering 1376 to 1386 has biased composition (low complexity); that stretch reads QQGRPGATGQA. Pro residues-rich tracts occupy residues 1388-1397 and 1457-1467; these read PPGPVGPPGL and PGGPPGLPGPS. 2 consecutive Collagen-like domains span residues 1393–1447 and 1448–1499; these read GPPG…GETG and IPGA…PPGE. The span at 1469-1481 shows a compositional bias: low complexity; the sequence is PKGAKGATGPAGP. A propeptide spans 1501 to 1736 (C-terminal propeptide); that stretch reads IQPLPIQMPK…VLLGPVCFMG (236 aa). The Fibrillar collagen NC1 domain maps to 1541-1735; the sequence is EEIFGSLDSL…GVLLGPVCFM (195 aa). C1571 and C1603 are oxidised to a cystine. Residues D1589, N1591, Q1592, C1594, and D1597 each coordinate Ca(2+). N1604 is a glycosylation site (N-linked (GlcNAc...) asparagine). Disulfide bonds link C1612–C1733 and C1655–C1689.

The protein belongs to the fibrillar collagen family. As to quaternary structure, trimers composed of three different chains: alpha 1(XI), alpha 2(XI), and alpha 3(XI). Alpha 3(XI) is a post-translational modification of alpha 1(II). Alpha 1(V) can also be found instead of alpha 3(XI)=1(II). Post-translationally, prolines at the third position of the tripeptide repeating unit (G-X-Y) are hydroxylated in some or all of the chains.

Its subcellular location is the secreted. It localises to the extracellular space. The protein resides in the extracellular matrix. In terms of biological role, may play an important role in fibrillogenesis by controlling lateral growth of collagen II fibrils. The protein is Collagen alpha-2(XI) chain (Col11a2) of Mus musculus (Mouse).